The sequence spans 548 residues: GLC7-interacting protein 2 (548 aa).

The segment covering 1–23 has biased composition (basic and acidic residues); the sequence is MYIKAEQKPQQFERKNEKLDRNK. 2 disordered regions span residues 1-54 and 118-143; these read MYIK…STEE and VESL…STVP. Serine 51 is modified (phosphoserine). Threonine 52 is subject to Phosphothreonine. Serine 155 bears the Phosphoserine mark. The segment at 191-212 is disordered; it reads RSKSLPTTPGIRSGNGVQARDG. Phosphoserine occurs at positions 221 and 238. The disordered stretch occupies residues 293–346; it reads FAHPAKISNPNNGKGTNNTKLRKSKRFQNLLKNRTDMPPSKSNKKFVNGGGAHE. Positions 419–534 constitute a CBM21 domain; that stretch reads HNGNDCNGVA…NNNGNNYKVD (116 aa).

As to quaternary structure, interacts with phosphatase 1 (GLC7).

The chain is GLC7-interacting protein 2 (GIP2) from Saccharomyces cerevisiae (strain ATCC 204508 / S288c) (Baker's yeast).